Here is a 196-residue protein sequence, read N- to C-terminus: UMP-CMP kinase (196 aa).

ATP is bound at residue 13–18; the sequence is GAGKGT. A Phosphoserine modification is found at S33. The NMP stretch occupies residues 33 to 63; sequence SAGELLRDERKNPDSQYGELIEKYIKEGKIV. Residue R39 participates in a ribonucleoside 5'-phosphate binding. 2 positions are modified to N6-acetyllysine: K43 and K55. 61 to 63 is an a ribonucleoside 5'-phosphate binding site; that stretch reads KIV. Residue K73 forms a Glycyl lysine isopeptide (Lys-Gly) (interchain with G-Cter in SUMO2) linkage. 93-96 contributes to the a ribonucleoside 5'-phosphate binding site; it reads GFPR. N100 serves as a coordination point for CMP. An N6-succinyllysine modification is found at K106. The LID stretch occupies residues 133 to 143; that stretch reads ERGKSSGRSDD. Residue R134 coordinates ATP. Residues R140 and R151 each coordinate a ribonucleoside 5'-phosphate. K179 is an ATP binding site. S180 is subject to Phosphoserine.

Belongs to the adenylate kinase family. UMP-CMP kinase subfamily. In terms of assembly, monomer. Mg(2+) serves as cofactor. As to expression, ubiquitously expressed.

It localises to the nucleus. The protein localises to the cytoplasm. The catalysed reaction is CMP + ATP = CDP + ADP. It catalyses the reaction dCMP + ATP = dCDP + ADP. It carries out the reaction UMP + ATP = UDP + ADP. The enzyme catalyses a 2'-deoxyribonucleoside 5'-diphosphate + ATP = a 2'-deoxyribonucleoside 5'-triphosphate + ADP. The catalysed reaction is a ribonucleoside 5'-diphosphate + ATP = a ribonucleoside 5'-triphosphate + ADP. Functionally, catalyzes the phosphorylation of pyrimidine nucleoside monophosphates at the expense of ATP. Plays an important role in de novo pyrimidine nucleotide biosynthesis. Has preference for UMP and CMP as phosphate acceptors. Also displays broad nucleoside diphosphate kinase activity. The polypeptide is UMP-CMP kinase (Homo sapiens (Human)).